Here is a 239-residue protein sequence, read N- to C-terminus: Sugar fermentation stimulation protein homolog (239 aa).

It belongs to the SfsA family.

The protein is Sugar fermentation stimulation protein homolog of Sinorhizobium medicae (strain WSM419) (Ensifer medicae).